Reading from the N-terminus, the 1231-residue chain is Multifunctional 2-oxoglutarate metabolism enzyme (1231 aa).

Residues 1 to 41 are 2-oxoglutarate dehydrogenase E1, N-terminal part; it reads MANISSPFGQNEWLVEAMYRKFRDDPSSVDPSWHEFLVDYS. A compositionally biased stretch (basic and acidic residues) spans 24-37; sequence DDPSSVDPSWHEFL. The interval 24 to 56 is disordered; it reads DDPSSVDPSWHEFLVDYSPEPTSQPAAEPTRVT. A linker region spans residues 42-88; that stretch reads PEPTSQPAAEPTRVTSPLVAERAAAAAPQAPPKPADTAAAGNGVVAA. The succinyltransferase E2 stretch occupies residues 89 to 337; sequence LAAKTAVPPP…LRTIHELLLS (249 aa). The active-site Proton acceptor; for succinyltransferase activity is the histidine 316. The tract at residues 338 to 1231 is 2-oxoglutarate dehydrogenase E1, C-terminal part; it reads DGFWDEVFRE…QQEILDEAFG (894 aa). Arginine 542 contributes to the thiamine diphosphate binding site. 2-oxoglutarate is bound by residues histidine 581 and serine 606. Positions 606, 608, 649, 650, 651, and 682 each coordinate thiamine diphosphate. A Mg(2+)-binding site is contributed by aspartate 649. Mg(2+)-binding residues include asparagine 682 and isoleucine 684. Positions 787–817 form a coiled coil; the sequence is DISMKEAEDALRDYQGQLERVFNEVRELEKH. Histidine 1024 is a 2-oxoglutarate binding site. Residues threonine 1042, arginine 1058, lysine 1093, serine 1096, glutamine 1146, arginine 1153, and arginine 1154 each contribute to the acetyl-CoA site.

Belongs to the 2-oxoacid dehydrogenase family. Kgd subfamily. In terms of assembly, homodimer. The 2-oxoglutarate dehydrogenase (ODH) complex contains multiple copies of three enzymatic components: 2-oxoglutarate dehydrogenase (E1), dihydrolipoamide succinyltransferase (E2) and lipoamide dehydrogenase (E3). The cofactor is Mg(2+). Thiamine diphosphate is required as a cofactor.

It catalyses the reaction glyoxylate + 2-oxoglutarate + H(+) = 2-hydroxy-3-oxoadipate + CO2. It carries out the reaction 2-oxoglutarate + H(+) = succinate semialdehyde + CO2. The catalysed reaction is N(6)-[(R)-lipoyl]-L-lysyl-[protein] + 2-oxoglutarate + H(+) = N(6)-[(R)-S(8)-succinyldihydrolipoyl]-L-lysyl-[protein] + CO2. The enzyme catalyses N(6)-[(R)-dihydrolipoyl]-L-lysyl-[protein] + succinyl-CoA = N(6)-[(R)-S(8)-succinyldihydrolipoyl]-L-lysyl-[protein] + CoA. Its pathway is carbohydrate metabolism; tricarboxylic acid cycle; succinate from 2-oxoglutarate (transferase route): step 1/2. The protein operates within carbohydrate metabolism; tricarboxylic acid cycle; succinyl-CoA from 2-oxoglutarate (dehydrogenase route): step 1/1. Its activity is regulated as follows. Alpha-ketoglutarate dehydrogenase and decarboxylase activities are inhibited by unphosphorylated GarA, and allosterically activated by acetyl-CoA, the main substrate of the TCA cycle. In terms of biological role, shows three enzymatic activities that share a first common step, the attack of thiamine-PP on 2-oxoglutarate (alpha-ketoglutarate, KG), leading to the formation of an enamine-thiamine-PP intermediate upon decarboxylation. Thus, displays KGD activity, catalyzing the decarboxylation from five-carbon 2-oxoglutarate to four-carbon succinate semialdehyde (SSA). Also catalyzes C-C bond formation between the activated aldehyde formed after decarboxylation of alpha-ketoglutarate and the carbonyl of glyoxylate (GLX), to yield 2-hydroxy-3-oxoadipate (HOA), which spontaneously decarboxylates to form 5-hydroxylevulinate (HLA). And is also a component of the 2-oxoglutarate dehydrogenase (ODH) complex, that catalyzes the overall conversion of 2-oxoglutarate to succinyl-CoA and CO(2). The KG decarboxylase and KG dehydrogenase reactions provide two alternative, tightly regulated, pathways connecting the oxidative and reductive branches of the TCA cycle. The sequence is that of Multifunctional 2-oxoglutarate metabolism enzyme (kgd) from Mycobacterium bovis (strain ATCC BAA-935 / AF2122/97).